The following is a 205-amino-acid chain: Outer-membrane lipoprotein carrier protein (205 aa).

The signal sequence occupies residues 1–19 (MKKIIICFIFVFSINISFA).

The protein belongs to the LolA family. As to quaternary structure, monomer.

The protein resides in the periplasm. In terms of biological role, participates in the translocation of lipoproteins from the inner membrane to the outer membrane. Only forms a complex with a lipoprotein if the residue after the N-terminal Cys is not an aspartate (The Asp acts as a targeting signal to indicate that the lipoprotein should stay in the inner membrane). This Francisella tularensis subsp. novicida (strain U112) protein is Outer-membrane lipoprotein carrier protein.